The chain runs to 264 residues: Tryptophan synthase alpha chain (264 aa).

Residues glutamate 49 and aspartate 60 each act as proton acceptor in the active site.

It belongs to the TrpA family. In terms of assembly, tetramer of two alpha and two beta chains.

It carries out the reaction (1S,2R)-1-C-(indol-3-yl)glycerol 3-phosphate + L-serine = D-glyceraldehyde 3-phosphate + L-tryptophan + H2O. It participates in amino-acid biosynthesis; L-tryptophan biosynthesis; L-tryptophan from chorismate: step 5/5. Functionally, the alpha subunit is responsible for the aldol cleavage of indoleglycerol phosphate to indole and glyceraldehyde 3-phosphate. This chain is Tryptophan synthase alpha chain, found in Geobacter sulfurreducens (strain ATCC 51573 / DSM 12127 / PCA).